A 612-amino-acid polypeptide reads, in one-letter code: UvrABC system protein C (612 aa).

The GIY-YIG domain occupies 20 to 98; sequence THSGVYRMLD…IKQHRPKYNI (79 aa). The 36-residue stretch at 208–243 folds into the UVR domain; it reads SSVLEEISANMYQASEDMEYEKAQVYRDQLVVLRKL.

The protein belongs to the UvrC family. Interacts with UvrB in an incision complex.

The protein localises to the cytoplasm. In terms of biological role, the UvrABC repair system catalyzes the recognition and processing of DNA lesions. UvrC both incises the 5' and 3' sides of the lesion. The N-terminal half is responsible for the 3' incision and the C-terminal half is responsible for the 5' incision. The polypeptide is UvrABC system protein C (Francisella tularensis subsp. holarctica (strain LVS)).